The following is a 95-amino-acid chain: Aspartyl/glutamyl-tRNA(Asn/Gln) amidotransferase subunit C (95 aa).

The protein belongs to the GatC family. As to quaternary structure, heterotrimer of A, B and C subunits.

It carries out the reaction L-glutamyl-tRNA(Gln) + L-glutamine + ATP + H2O = L-glutaminyl-tRNA(Gln) + L-glutamate + ADP + phosphate + H(+). The catalysed reaction is L-aspartyl-tRNA(Asn) + L-glutamine + ATP + H2O = L-asparaginyl-tRNA(Asn) + L-glutamate + ADP + phosphate + 2 H(+). Its function is as follows. Allows the formation of correctly charged Asn-tRNA(Asn) or Gln-tRNA(Gln) through the transamidation of misacylated Asp-tRNA(Asn) or Glu-tRNA(Gln) in organisms which lack either or both of asparaginyl-tRNA or glutaminyl-tRNA synthetases. The reaction takes place in the presence of glutamine and ATP through an activated phospho-Asp-tRNA(Asn) or phospho-Glu-tRNA(Gln). The chain is Aspartyl/glutamyl-tRNA(Asn/Gln) amidotransferase subunit C from Chloroherpeton thalassium (strain ATCC 35110 / GB-78).